The sequence spans 64 residues: Small, acid-soluble spore protein beta (64 aa).

This sequence belongs to the alpha/beta-type SASP family.

Functionally, SASP are bound to spore DNA. They are double-stranded DNA-binding proteins that cause DNA to change to an a-like conformation. They protect the DNA backbone from chemical and enzymatic cleavage and are thus involved in dormant spore's high resistance to UV light. The polypeptide is Small, acid-soluble spore protein beta (Paraclostridium bifermentans (Clostridium bifermentans)).